We begin with the raw amino-acid sequence, 682 residues long: Kinesin-like protein KIF2A (682 aa).

Residues 1–192 (MVTSLNEDSE…LDYRPLTTSD (192 aa)) are globular. The tract at residues 39–129 (LAPDEEIDPG…GKKDFGLASR (91 aa)) is disordered. The span at 99–115 (IEQSASRQQNGSVSDIS) shows a compositional bias: polar residues. In terms of domain architecture, Kinesin motor spans 198 to 528 (RICVCVRKRP…LRYANRVKEL (331 aa)). 288–295 (GQTGSGKT) is an ATP binding site. Residues 638–673 (QLEAILEKKIDILTELRDKVKSFRAALQEEEHASKQ) adopt a coiled-coil conformation.

It belongs to the TRAFAC class myosin-kinesin ATPase superfamily. Kinesin family. MCAK/KIF2 subfamily. As to quaternary structure, interacts with aurka and plk1. Phosphorylation by plk1 promotes location at spindle microtubules and spindle poles, and enhances its microtubule depolymerization activity. In terms of processing, phosphorylation by AURKA interferes with location at spindle microtubules and spindle poles, and inhibits its microtubule depolymerization activity.

Its subcellular location is the cytoplasm. The protein localises to the cytoskeleton. The protein resides in the microtubule organizing center. It is found in the centrosome. It localises to the spindle pole. Its subcellular location is the spindle. Its function is as follows. Plus end-directed microtubule-dependent motor. May regulate microtubule dynamics during axonal growth. Required for normal progression through mitosis. Required for normal congress of chromosomes at the metaphase plate. Required for normal spindle dynamics during mitosis. Promotes spindle turnover. Implicated in formation of bipolar mitotic spindles Has microtubule depolymerization activity. This is Kinesin-like protein KIF2A (kif2a) from Xenopus laevis (African clawed frog).